The primary structure comprises 456 residues: tRNA-2-methylthio-N(6)-dimethylallyladenosine synthase (456 aa).

Residues 6 to 125 form the MTTase N-terminal domain; that stretch reads KRLFIKTYGC…LPELIAQAHR (120 aa). [4Fe-4S] cluster-binding residues include cysteine 15, cysteine 51, cysteine 88, cysteine 163, cysteine 167, and cysteine 170. The Radical SAM core domain maps to 149 to 385; the sequence is QVEGYSAFVT…QELLSDQQAA (237 aa). The region spanning 388–450 is the TRAM domain; the sequence is ESMIGRTLPV…RNSLSGSLTG (63 aa).

This sequence belongs to the methylthiotransferase family. MiaB subfamily. Monomer. It depends on [4Fe-4S] cluster as a cofactor.

Its subcellular location is the cytoplasm. It carries out the reaction N(6)-dimethylallyladenosine(37) in tRNA + (sulfur carrier)-SH + AH2 + 2 S-adenosyl-L-methionine = 2-methylsulfanyl-N(6)-dimethylallyladenosine(37) in tRNA + (sulfur carrier)-H + 5'-deoxyadenosine + L-methionine + A + S-adenosyl-L-homocysteine + 2 H(+). In terms of biological role, catalyzes the methylthiolation of N6-(dimethylallyl)adenosine (i(6)A), leading to the formation of 2-methylthio-N6-(dimethylallyl)adenosine (ms(2)i(6)A) at position 37 in tRNAs that read codons beginning with uridine. The chain is tRNA-2-methylthio-N(6)-dimethylallyladenosine synthase from Maricaulis maris (strain MCS10) (Caulobacter maris).